A 433-amino-acid polypeptide reads, in one-letter code: Oxaloacetate decarboxylase beta chain (433 aa).

Helical transmembrane passes span Leu16 to Ala36, Val122 to Met142, Thr159 to Leu178, Leu180 to Ala202, Ile222 to Leu244, Ile266 to Leu286, Thr308 to Ala327, Thr339 to Ala361, and Met409 to Leu431.

Belongs to the GcdB/MmdB/OadB family. As to quaternary structure, heterotrimer of an alpha, a beta and a gamma subunit. It depends on Na(+) as a cofactor. In terms of processing, the N-terminus is blocked.

The protein localises to the cell membrane. It carries out the reaction oxaloacetate + 2 Na(+)(in) + H(+) = pyruvate + 2 Na(+)(out) + CO2. Functionally, catalyzes the decarboxylation of oxaloacetate coupled to Na(+) translocation. In Klebsiella pneumoniae, this protein is Oxaloacetate decarboxylase beta chain (oadB).